The sequence spans 141 residues: VLSSADKNNVKACWGKIGSHAGEYGAEALERTFCSFPTTKTYFPHFDLSHGSAQVQTHGQKVADALTKAVAHINNLPNALSDLSDLHAYKLRVDPVNFKFLSHCLLVTLACHHPEEFTPAVHASLDKFFSAVSTVLTSKYR.

The Globin domain maps to 1–141 (VLSSADKNNV…VSTVLTSKYR (141 aa)). At serine 3 the chain carries Phosphoserine. 2 positions are modified to N6-succinyllysine: lysine 7 and lysine 11. The residue at position 16 (lysine 16) is an N6-acetyllysine; alternate. Lysine 16 carries the post-translational modification N6-succinyllysine; alternate. The residue at position 24 (tyrosine 24) is a Phosphotyrosine. Position 35 is a phosphoserine (serine 35). Lysine 40 bears the N6-succinyllysine mark. Serine 49 bears the Phosphoserine mark. Position 58 (histidine 58) interacts with O2. Histidine 87 serves as a coordination point for heme b. A Phosphoserine modification is found at serine 102. Threonine 108 is subject to Phosphothreonine. Position 124 is a phosphoserine (serine 124). 2 positions are modified to phosphothreonine: threonine 134 and threonine 137. Position 138 is a phosphoserine (serine 138).

It belongs to the globin family. Heterotetramer of two alpha chains and two beta chains. Red blood cells.

Its function is as follows. Involved in oxygen transport from the lung to the various peripheral tissues. Hemopressin acts as an antagonist peptide of the cannabinoid receptor CNR1. Hemopressin-binding efficiently blocks cannabinoid receptor CNR1 and subsequent signaling. In Panthera tigris sumatrae (Sumatran tiger), this protein is Hemoglobin subunit alpha (HBA).